Reading from the N-terminus, the 682-residue chain is Methionine synthase reductase (682 aa).

The Flavodoxin-like domain maps to 4-147 (FLIAFGSQTG…EVEPWIEKFF (144 aa)). An FMN-binding site is contributed by 93 to 124 (LLGLGDSNYSSYQTIPRKIDKQLTALGANRLF). Residues 271-516 (TKPFEVLVVS…GKEPARFRLP (246 aa)) enclose the FAD-binding FR-type domain. Lys-293 is a binding site for NADP(+). Residues 455-458 (RPYS) and 488-491 (GLAT) contribute to the FAD site. NADP(+) is bound by residues 607–609 (RVQ) and Asp-643. An FAD-binding site is contributed by Trp-681.

Requires FAD as cofactor. FMN is required as a cofactor.

It carries out the reaction 2 methylcob(III)alamin-[methionine synthase] + 2 S-adenosyl-L-homocysteine + NADP(+) + H(+) = 2 cob(II)alamin-[methionine synthase] + 2 S-adenosyl-L-methionine + NADPH. Involved in the reductive regeneration of cob(I)alamin cofactor required for the maintenance of methionine synthase in a functional state. The chain is Methionine synthase reductase from Caenorhabditis elegans.